We begin with the raw amino-acid sequence, 584 residues long: Breast carcinoma-amplified sequence 1 (584 aa).

Disordered stretches follow at residues 1–29, 59–280, and 297–377; these read MGNQMSVPQRVEDQENEPEAETYQDNASA, VATS…AAAI, and PNKA…GKLF. 2 stretches are compositionally biased toward polar residues: residues 59–69 and 112–128; these read VATSSPETTEI and ADSSLGSVKLDVSSNKA. Phosphoserine is present on residues serine 124 and serine 192. Composition is skewed to basic and acidic residues over residues 186–226, 238–252, and 300–311; these read SKPK…KVDE, PAGKDIVDGKEKEGQ, and AETKKDPEDTGA. Phosphoserine is present on serine 314. The span at 314-354 shows a compositional bias: polar residues; sequence SPTTSADLKSDKANFTSQETQGAGKNSKGCNPSGHTQSVTT. Residues 357 to 366 are compositionally biased toward basic and acidic residues; the sequence is PAKEGTKEKS. Serine 381 and serine 399 each carry phosphoserine. Positions 415–584 are disordered; the sequence is TVDLNEGDAA…VSIGPVGKSK (170 aa). Basic and acidic residues predominate over residues 428 to 439; it reads TEAKLKREESKP. Residue threonine 480 is modified to Phosphothreonine. A compositionally biased stretch (basic and acidic residues) spans 494–506; it reads KGKEGSSKDKKSA. Over residues 525–540 the composition is skewed to polar residues; sequence CTEQATVDTNSLQNGD. The segment covering 541 to 550 has biased composition (basic and acidic residues); it reads KLQKRPEKRQ. Serine 552 carries the post-translational modification Phosphoserine. The interacts with DYNLL1 and DYNLL2 stretch occupies residues 565 to 584; it reads MLDAQVQTDPVSIGPVGKSK.

As to quaternary structure, homodimer. Interacts with DYNLL1 and DYNLL2. In terms of tissue distribution, highly expressed in the brain and, more specifically, in oligodendrocytes (at protein level). Expressed in the prostate, and at lower levels in testis, intestine and colon. Overexpressed in most breast cancer cell lines and down-regulated in some colorectal tumors.

It localises to the cytoplasm. Required for myelination. This chain is Breast carcinoma-amplified sequence 1 (BCAS1), found in Homo sapiens (Human).